Consider the following 265-residue polypeptide: Transcription factor BHLH089 (265 aa).

The disordered stretch occupies residues methionine 1–aspartate 132. 2 stretches are compositionally biased toward gly residues: residues leucine 17–glycine 29 and serine 44–alanine 53. Positions serine 95–arginine 105 are enriched in polar residues. Residues glutamine 142–arginine 155 form a basic motif; degenerate region. One can recognise a bHLH domain in the interval glutamine 142–leucine 192. The segment at glutamate 156–leucine 192 is helix-loop-helix motif.

The protein belongs to the bHLH protein family. As to quaternary structure, interacts with RSS3.

Its subcellular location is the nucleus. Its function is as follows. Transcription factor that may regulate jasmonate-regulated genes. This chain is Transcription factor BHLH089, found in Oryza sativa subsp. japonica (Rice).